We begin with the raw amino-acid sequence, 82 residues long: Small ribosomal subunit protein bS16 (82 aa).

It belongs to the bacterial ribosomal protein bS16 family.

This is Small ribosomal subunit protein bS16 from Klebsiella pneumoniae subsp. pneumoniae (strain ATCC 700721 / MGH 78578).